The primary structure comprises 395 residues: Methylmalonyl-CoA decarboxylase subunit beta (395 aa).

The next 9 helical transmembrane spans lie at 17-37 (LNMG…LAIA), 43-63 (LLLV…AGMM), 103-123 (GIFP…GPLI), 128-148 (SLLL…GAIA), 180-200 (PHLM…VPII), 230-250 (IIFP…AATL), 278-298 (INII…AEAF), 304-324 (LAIL…GVLL), and 374-394 (GPNV…LSLF).

Belongs to the GcdB/MmdB/OadB family. As to quaternary structure, the methylmalonyl-CoA decarboxylase is composed of four subunits: the carboxyltransferase alpha subunit (MmdA), the tunnel beta subunit (MmdB), the biotin-containing gamma subunit (MmdC) and the delta subunit (MmdD). Post-translationally, the N-terminus is blocked.

It is found in the cell membrane. It catalyses the reaction (S)-methylmalonyl-CoA + Na(+)(in) + H(+)(out) = propanoyl-CoA + Na(+)(out) + CO2. Its function is as follows. Tunnel subunit of the sodium ion pump methylmalonyl-CoA decarboxylase, which converts the chemical energy of a decarboxylation reaction into an electrochemical gradient of Na(+) ions across the cytoplasmic membrane, thereby creating a sodium ion motive force that is used for ATP synthesis. The beta subunit catalyzes the decarboxylation of the carboxybiotin carrier protein and the coupled export of Na(+) ions. In Propionigenium modestum, this protein is Methylmalonyl-CoA decarboxylase subunit beta.